The sequence spans 591 residues: Aspartate--tRNA ligase (591 aa).

Glu-173 provides a ligand contact to L-aspartate. The interval 197 to 200 (QLFK) is aspartate. Arg-219 contacts L-aspartate. Residues 219–221 (RDE) and Gln-228 contribute to the ATP site. His-446 contacts L-aspartate. ATP is bound at residue Glu-482. An L-aspartate-binding site is contributed by Arg-489. Position 534–537 (534–537 (GLDR)) interacts with ATP.

The protein belongs to the class-II aminoacyl-tRNA synthetase family. Type 1 subfamily. In terms of assembly, homodimer.

It localises to the cytoplasm. It catalyses the reaction tRNA(Asp) + L-aspartate + ATP = L-aspartyl-tRNA(Asp) + AMP + diphosphate. Catalyzes the attachment of L-aspartate to tRNA(Asp) in a two-step reaction: L-aspartate is first activated by ATP to form Asp-AMP and then transferred to the acceptor end of tRNA(Asp). In Limosilactobacillus fermentum (strain NBRC 3956 / LMG 18251) (Lactobacillus fermentum), this protein is Aspartate--tRNA ligase.